A 64-amino-acid polypeptide reads, in one-letter code: Small ribosomal subunit protein eS17 (64 aa).

The protein belongs to the eukaryotic ribosomal protein eS17 family.

This Halorubrum lacusprofundi (strain ATCC 49239 / DSM 5036 / JCM 8891 / ACAM 34) protein is Small ribosomal subunit protein eS17.